Here is a 58-residue protein sequence, read N- to C-terminus: Small ribosomal subunit protein bS21 (58 aa).

The interval 34 to 58 is disordered; the sequence is KREHYEKPSVKRKKKSEAARKRKFK. The span at 43-58 shows a compositional bias: basic residues; the sequence is VKRKKKSEAARKRKFK.

The protein belongs to the bacterial ribosomal protein bS21 family.

This chain is Small ribosomal subunit protein bS21, found in Clostridium acetobutylicum (strain ATCC 824 / DSM 792 / JCM 1419 / IAM 19013 / LMG 5710 / NBRC 13948 / NRRL B-527 / VKM B-1787 / 2291 / W).